Here is a 258-residue protein sequence, read N- to C-terminus: Phosphate import ATP-binding protein PstB (258 aa).

The region spanning 13–253 is the ABC transporter domain; it reads ITVENLNLWY…PREKSTEDYI (241 aa). ATP is bound at residue 45–52; it reads GPSGCGKS.

The protein belongs to the ABC transporter superfamily. Phosphate importer (TC 3.A.1.7) family. The complex is composed of two ATP-binding proteins (PstB), two transmembrane proteins (PstC and PstA) and a solute-binding protein (PstS).

The protein resides in the cell membrane. The enzyme catalyses phosphate(out) + ATP + H2O = ADP + 2 phosphate(in) + H(+). Functionally, part of the ABC transporter complex PstSACB involved in phosphate import. Responsible for energy coupling to the transport system. This is Phosphate import ATP-binding protein PstB from Methanosarcina mazei (strain ATCC BAA-159 / DSM 3647 / Goe1 / Go1 / JCM 11833 / OCM 88) (Methanosarcina frisia).